Here is a 515-residue protein sequence, read N- to C-terminus: Fatty acyl-CoA reductase 1 (515 aa).

At 1–465 the chain is on the cytoplasmic side; sequence MLSIPEFYQG…ARKHLNKLRN (465 aa). The helical transmembrane segment at 466–484 threads the bilayer; sequence IRYGFNTILVVLIWRVFIA. The Peroxisomal segment spans residues 485–515; it reads RSQMARNIWYFVVSMCFKFLSYFRASSTMRY.

This sequence belongs to the fatty acyl-CoA reductase family.

Its subcellular location is the peroxisome membrane. It carries out the reaction a long-chain fatty acyl-CoA + 2 NADPH + 2 H(+) = a long-chain primary fatty alcohol + 2 NADP(+) + CoA. The catalysed reaction is hexadecanoyl-CoA + 2 NADPH + 2 H(+) = hexadecan-1-ol + 2 NADP(+) + CoA. The enzyme catalyses octadecanoyl-CoA + 2 NADPH + 2 H(+) = octadecan-1-ol + 2 NADP(+) + CoA. It catalyses the reaction (9Z)-octadecenoyl-CoA + 2 NADPH + 2 H(+) = (9Z)-octadecen-1-ol + 2 NADP(+) + CoA. It carries out the reaction (9Z,12Z)-octadecadienoyl-CoA + 2 NADPH + 2 H(+) = (9Z,12Z)-octadecadien-1-ol + 2 NADP(+) + CoA. The catalysed reaction is eicosanoyl-CoA + 2 NADPH + 2 H(+) = eicosan-1-ol + 2 NADP(+) + CoA. The enzyme catalyses 16-methylheptadecanoyl-CoA + 2 NADPH + 2 H(+) = 16-methylheptadecan-1-ol + 2 NADP(+) + CoA. It catalyses the reaction 18-methylnonadecanoyl-CoA + 2 NADPH + 2 H(+) = 18-methylnonadecan-1-ol + 2 NADP(+) + CoA. Functionally, catalyzes the reduction of saturated and unsaturated C16 or C18 fatty acyl-CoA to fatty alcohols. It plays an essential role in the production of ether lipids/plasmalogens which synthesis requires fatty alcohols. In parallel, it is also required for wax monoesters production since fatty alcohols also constitute a substrate for their synthesis. The sequence is that of Fatty acyl-CoA reductase 1 (far1) from Xenopus laevis (African clawed frog).